We begin with the raw amino-acid sequence, 579 residues long: Pentatricopeptide repeat-containing protein At2g15690, mitochondrial (579 aa).

The N-terminal 49 residues, 1 to 49 (MSSLMAIRCARTQNIVTIGSLLQLRSSFPRLSSQFHFSGTLNSIPIKHL), are a transit peptide targeting the mitochondrion. 2 stretches are compositionally biased toward polar residues: residues 56-71 (NDYHQNPQSGSPSQHQ) and 78-103 (SFDSQNQTNTNQRVPQSPNQWSTQHG). The disordered stretch occupies residues 56–208 (NDYHQNPQSG…QMNEVAPPPS (153 aa)). Composition is skewed to low complexity over residues 117-136 (GGQRPPYGGQNPQQGGQMSQ) and 148-199 (RPQY…SPNQ). PPR repeat units lie at residues 235–269 (DRECFVLLFESCANLKSLEHSKKVHDHFLQSKFRG), 270–300 (DPKLNNMVISMFGECSSITDAKRVFDHMVDK), 301–335 (DMDSWHLMMCAYSDNGMGDDALHLFEEMTKHGLKP), 336–371 (NEETFLTVFLACATVGGIEEAFLHFDSMKNEHGISP), and 372–402 (KTEHYLGVLGVLGKCGHLVEAEQYIRDLPFE). Residues 485 to 579 (GVVYVPDTRF…DGKCSCGDYW (95 aa)) are type DYW motif.

It belongs to the PPR family. PCMP-H subfamily.

The protein localises to the mitochondrion. The polypeptide is Pentatricopeptide repeat-containing protein At2g15690, mitochondrial (PCMP-H66) (Arabidopsis thaliana (Mouse-ear cress)).